A 157-amino-acid chain; its full sequence is Putative tRNA (cytidine(34)-2'-O)-methyltransferase (157 aa).

S-adenosyl-L-methionine is bound by residues isoleucine 79, glycine 104, and isoleucine 125.

The protein belongs to the class IV-like SAM-binding methyltransferase superfamily. RNA methyltransferase TrmH family. TrmL subfamily.

Its subcellular location is the cytoplasm. It carries out the reaction cytidine(34) in tRNA + S-adenosyl-L-methionine = 2'-O-methylcytidine(34) in tRNA + S-adenosyl-L-homocysteine + H(+). The catalysed reaction is 5-carboxymethylaminomethyluridine(34) in tRNA(Leu) + S-adenosyl-L-methionine = 5-carboxymethylaminomethyl-2'-O-methyluridine(34) in tRNA(Leu) + S-adenosyl-L-homocysteine + H(+). Could methylate the ribose at the nucleotide 34 wobble position in tRNA. This Geobacillus stearothermophilus (Bacillus stearothermophilus) protein is Putative tRNA (cytidine(34)-2'-O)-methyltransferase.